The sequence spans 422 residues: Probable metallocarboxypeptidase A (422 aa).

An N-terminal signal peptide occupies residues 1 to 17 (MRSVLSLALLAANVVTA). A propeptide spans 18 to 112 (AVVAPFDYSG…FEAYSAGYAP (95 aa)) (activation peptide). In terms of domain architecture, Peptidase M14 spans 119 to 419 (SYHSYQDHLS…AGTVAMLKAV (301 aa)). Zn(2+) contacts are provided by histidine 179 and glutamate 182. Residues 179–182 (HARE), arginine 237, and 254–255 (NR) contribute to the substrate site. Cysteine 248 and cysteine 271 are oxidised to a cystine. A Zn(2+)-binding site is contributed by histidine 309. Position 310 to 311 (310 to 311 (SY)) interacts with substrate. Glutamate 385 functions as the Proton donor/acceptor in the catalytic mechanism.

It belongs to the peptidase M14 family. The cofactor is Zn(2+).

It localises to the secreted. Extracellular metalloprotease that contributes to pathogenicity. In Arthroderma benhamiae (strain ATCC MYA-4681 / CBS 112371) (Trichophyton mentagrophytes), this protein is Probable metallocarboxypeptidase A (MCPA).